We begin with the raw amino-acid sequence, 419 residues long: Glutamyl-tRNA reductase (419 aa).

Substrate contacts are provided by residues 50-53 (TCNR), Ser108, 113-115 (ETQ), and Gln119. The active-site Nucleophile is Cys51. 188–193 (GAGEMI) contacts NADP(+).

It belongs to the glutamyl-tRNA reductase family. As to quaternary structure, homodimer.

It catalyses the reaction (S)-4-amino-5-oxopentanoate + tRNA(Glu) + NADP(+) = L-glutamyl-tRNA(Glu) + NADPH + H(+). It functions in the pathway porphyrin-containing compound metabolism; protoporphyrin-IX biosynthesis; 5-aminolevulinate from L-glutamyl-tRNA(Glu): step 1/2. Its function is as follows. Catalyzes the NADPH-dependent reduction of glutamyl-tRNA(Glu) to glutamate 1-semialdehyde (GSA). This Albidiferax ferrireducens (strain ATCC BAA-621 / DSM 15236 / T118) (Rhodoferax ferrireducens) protein is Glutamyl-tRNA reductase.